The primary structure comprises 85 residues: Toxin BmKaTx10 (85 aa).

A signal peptide spans 1-19 (MNYLVMVSFALLLMTGVES). The LCN-type CS-alpha/beta domain maps to 21–83 (RDGYIALPHN…VPIRVPGRCH (63 aa)). Intrachain disulfides connect Cys31-Cys82, Cys35-Cys55, Cys41-Cys65, and Cys45-Cys67.

It belongs to the long (4 C-C) scorpion toxin superfamily. Sodium channel inhibitor family. Alpha subfamily. As to expression, expressed by the venom gland.

Its subcellular location is the secreted. Its function is as follows. Alpha toxins bind voltage-independently at site-3 of sodium channels (Nav) and inhibit the inactivation of the activated channels, thereby blocking neuronal transmission. In Olivierus martensii (Manchurian scorpion), this protein is Toxin BmKaTx10.